Here is a 101-residue protein sequence, read N- to C-terminus: Carboxysome shell vertex protein CcmL (101 aa).

The BMV domain occupies 1–84 (MQIAKVRGTV…VDAAVVAIID (84 aa)).

It belongs to the CcmL/EutN family. CcmL subfamily. Homopentamer. Interacts with full-length CcmM.

The protein resides in the carboxysome. Its function is as follows. Probably forms vertices in the carboxysome, a polyhedral inclusion where RuBisCO (ribulose bisphosphate carboxylase, rbcL-rbcS) is sequestered. Has been modeled to induce curvature upon insertion into an otherwise flat hexagonal molecular layer of CcmK subunits. This Nostoc sp. (strain PCC 7120 / SAG 25.82 / UTEX 2576) protein is Carboxysome shell vertex protein CcmL.